A 135-amino-acid chain; its full sequence is Beta/delta-urticatoxin-Ui2a (135 aa).

The first 18 residues, 1–18 (MGAIVLVAIMALVASSSA), serve as a signal peptide directing secretion. The propeptide occupies 19–72 (FSDDEQNMMNAEGEKGIRSYSAADDVSDMIESLFVNSGNRNLVLMMLSGRPQPN). Intrachain disulfides connect Cys75/Cys92, Cys82/Cys97, Cys91/Cys105, Cys107/Cys121, Cys114/Cys126, and Cys120/Cys134.

This sequence belongs to the urticatoxin-2 family. In terms of tissue distribution, expressed in trichomes, that are stiff epidermal hairs located on the surface of petioles and leaves.

It localises to the secreted. Its function is as follows. Plant defense neurotoxin that causes pain and systemic symptoms in mammals via modulation of voltage-gated sodium channels (Nav). Potent modulator of human Nav1.5/SCN5A (EC(50)=55 nM), Nav1.6/SCN8A (EC(50)=0.86 nM), and Nav1.7/SCN9A (EC(50)=208 nM), where it shifts the activation threshold to more negative potentials and delays fast inactivation. Also shifts the voltage-dependence of steady-state fast inactivation of Nav1.6/SCN8A, but not that of Nav1.5/SCN5A or Nav1.7/SCN9A. On Nav1.7/SCN9A, principally acts by binding to extracellular loops of domain IV (Nav site 3). In vivo, intraplantar injection into mice causes numerous dose-dependent, immediate, and long-lasting spontaneous pain behaviors, while no swelling is observed in the injected paw. At the highest doses tested, systemic symptoms including hypokinesia and hypersalivation are observed. This chain is Beta/delta-urticatoxin-Ui2a, found in Urtica incisa (Scrub nettle).